A 319-amino-acid chain; its full sequence is GPI-specific phospholipase A2-like PGAP3 (319 aa).

A signal peptide spans 1–23 (MAGRTARLVLLAGAAALASGSQG). The Lumenal portion of the chain corresponds to 24–101 (DREPVYRDCV…GKWPFSRFLC (78 aa)). Asn-40 carries N-linked (GlcNAc...) asparagine glycosylation. The helical transmembrane segment at 102-122 (FQEPASAVASFLNGLASLVML) threads the bilayer. Over 123 to 135 (CRYRTSVPASSPM) the chain is Cytoplasmic. Residues 136–156 (YPTCVAFAWVSLNAWFWSTVF) traverse the membrane as a helical segment. Residues 157-169 (HTRDTDLTEKMDY) are Lumenal-facing. Residues 170–190 (FCASTVILHSIYLCCVRTVGL) form a helical membrane-spanning segment. The Cytoplasmic portion of the chain corresponds to 191 to 200 (QHPAMASAFR). The helical transmembrane segment at 201 to 221 (ALLLLLLTAHVSYLSLIHFDY) threads the bilayer. The Lumenal segment spans residues 222 to 224 (GYN). Residues 225-245 (MAANVAIGLLNAAWWLAWCLW) traverse the membrane as a helical segment. Over 246 to 257 (NQRLPHVHKCVA) the chain is Cytoplasmic. A helical transmembrane segment spans residues 258-278 (VVLLLQGLSLLELLDFPPLFW). The Lumenal segment spans residues 279-281 (VLD). The chain crosses the membrane as a helical span at residues 282 to 302 (AHAIWHISTIPVHVLFFSFLE). Residues 303–319 (DDSLYLLKESEAKVKLD) lie on the Cytoplasmic side of the membrane.

Belongs to the PGAP3 family.

Its subcellular location is the golgi apparatus membrane. In terms of biological role, involved in the fatty acid remodeling steps of GPI-anchor maturation where the unsaturated acyl chain at sn-2 of inositol phosphate is replaced by a saturated stearoyl chain. May catalyze the first step of the fatty acid remodeling, by removing the unsaturated acyl chain at sn-2 of inositol phosphate, generating a lyso-GPI intermediate. The fatty acid remodeling steps is critical for the integration of GPI-APs into lipid rafts. The sequence is that of GPI-specific phospholipase A2-like PGAP3 from Bos taurus (Bovine).